The chain runs to 234 residues: Eukaryotic translation initiation factor 3 subunit K (234 aa).

The 174-residue stretch at 46-219 folds into the PCI domain; the sequence is SDIEANLALL…EAKPATTTES (174 aa).

Belongs to the eIF-3 subunit K family. In terms of assembly, component of the eukaryotic translation initiation factor 3 (eIF-3) complex.

The protein localises to the cytoplasm. Component of the eukaryotic translation initiation factor 3 (eIF-3) complex, which is involved in protein synthesis of a specialized repertoire of mRNAs and, together with other initiation factors, stimulates binding of mRNA and methionyl-tRNAi to the 40S ribosome. The eIF-3 complex specifically targets and initiates translation of a subset of mRNAs involved in cell proliferation. The protein is Eukaryotic translation initiation factor 3 subunit K of Yarrowia lipolytica (strain CLIB 122 / E 150) (Yeast).